Consider the following 213-residue polypeptide: Alkylbase DNA glycosidase-like protein mag2 (213 aa).

DNA contacts are provided by Lys53, Leu54, Ser61, His91, Gly94, Ser96, Lys97, Lys99, Glu102, Lys137, Gly138, Lys140, Thr143, Ser163, and Thr164.

Belongs to the alkylbase DNA glycosidase AlkA family.

It localises to the nucleus. Functionally, alkylbase DNA glycosidase-like protein that shows no DNA glycosylase activity for alkylated bases. The molecular role of mag2 appears to be abasic (AP) site recognition and protection, while possibly facilitating damage signaling by structurally sculpting the DNA substrate. Stimulates AP site binding to mismatch repair protein mutS. The sequence is that of Alkylbase DNA glycosidase-like protein mag2 from Schizosaccharomyces pombe (strain 972 / ATCC 24843) (Fission yeast).